Reading from the N-terminus, the 283-residue chain is Light-independent protochlorophyllide reductase iron-sulfur ATP-binding protein (283 aa).

ATP contacts are provided by residues 15-20 (GIGKST) and Lys44. Residue Ser19 coordinates Mg(2+). Positions 100 and 134 each coordinate [4Fe-4S] cluster. An ATP-binding site is contributed by 185 to 186 (NR).

Belongs to the NifH/BchL/ChlL family. As to quaternary structure, homodimer. Protochlorophyllide reductase is composed of three subunits; ChlL, ChlN and ChlB. [4Fe-4S] cluster serves as cofactor.

The catalysed reaction is chlorophyllide a + oxidized 2[4Fe-4S]-[ferredoxin] + 2 ADP + 2 phosphate = protochlorophyllide a + reduced 2[4Fe-4S]-[ferredoxin] + 2 ATP + 2 H2O. It participates in porphyrin-containing compound metabolism; chlorophyll biosynthesis (light-independent). Component of the dark-operative protochlorophyllide reductase (DPOR) that uses Mg-ATP and reduced ferredoxin to reduce ring D of protochlorophyllide (Pchlide) to form chlorophyllide a (Chlide). This reaction is light-independent. The L component serves as a unique electron donor to the NB-component of the complex, and binds Mg-ATP. This is Light-independent protochlorophyllide reductase iron-sulfur ATP-binding protein from Synechococcus sp. (strain JA-3-3Ab) (Cyanobacteria bacterium Yellowstone A-Prime).